We begin with the raw amino-acid sequence, 456 residues long: Probable hexose phosphate transport protein (456 aa).

The next 11 membrane-spanning stretches (helical) occupy residues 34–54 (IFYS…SFTF), 70–90 (LGII…VSGV), 113–133 (IFFG…INGW), 161–181 (VWST…GIAI), 185–205 (GWRG…FILI), 257–277 (YVLS…IYVV), 302–322 (LCVS…GWLS), 331–351 (GPMN…LWGT), 362–382 (AFLF…GLAA), 394–414 (ASGF…YPLG), and 421–441 (GWHG…LFFL).

Belongs to the major facilitator superfamily. Organophosphate:Pi antiporter (OPA) (TC 2.A.1.4) family.

The protein resides in the cell membrane. Transport protein for sugar phosphate uptake. This Chlamydia muridarum (strain MoPn / Nigg) protein is Probable hexose phosphate transport protein.